Here is a 440-residue protein sequence, read N- to C-terminus: MKLWGGRFKEEESKLMEDFNSSLSFDKKLYYEDIRGSIAHVKMLANQNIIKEEEKEKILLGLEEILKEIDEGILKIEGDYEDIHSFVEINLINKIGNVGKKLHTGRSRNDQVALDMKLYAKKSTEEVIECLKELMDSLIKVGNENNYIMPGYTHLQRAQVVTFRYHLLAYFEMFKRDEKRLKNALEILNESPLGSGALAGSTYSIDREYTAKLLGFRKPVDNFLDGVSDRDYIIELISKFSIIMMHLSRLSEELILWSSSEFRFIQIGDAYSTGSSIMPQKKNPDGAELIRGKTGRVYGDLIGILTVMKSLPLAYNKDMQEDKEPFFDAKDTVISCLKVMEGIISTLKVNKENLMKSVKKGFLNATEAADYLVNKGMAFRDAHKVIGEIVIYCEDKNSAIEDLSLEELKQFSDLFCEDIYGFIDYKSSINKGIKKEMGYS.

This sequence belongs to the lyase 1 family. Argininosuccinate lyase subfamily.

It localises to the cytoplasm. The enzyme catalyses 2-(N(omega)-L-arginino)succinate = fumarate + L-arginine. The protein operates within amino-acid biosynthesis; L-arginine biosynthesis; L-arginine from L-ornithine and carbamoyl phosphate: step 3/3. The protein is Argininosuccinate lyase of Clostridium botulinum (strain Okra / Type B1).